The chain runs to 487 residues: UDP-N-acetylmuramate--L-alanine ligase (487 aa).

129–135 (GTHGKTT) is a binding site for ATP.

It belongs to the MurCDEF family.

It localises to the cytoplasm. The catalysed reaction is UDP-N-acetyl-alpha-D-muramate + L-alanine + ATP = UDP-N-acetyl-alpha-D-muramoyl-L-alanine + ADP + phosphate + H(+). It participates in cell wall biogenesis; peptidoglycan biosynthesis. Cell wall formation. The protein is UDP-N-acetylmuramate--L-alanine ligase of Aliivibrio salmonicida (strain LFI1238) (Vibrio salmonicida (strain LFI1238)).